The primary structure comprises 128 residues: Large ribosomal subunit protein bL20 (128 aa).

It belongs to the bacterial ribosomal protein bL20 family.

Its function is as follows. Binds directly to 23S ribosomal RNA and is necessary for the in vitro assembly process of the 50S ribosomal subunit. It is not involved in the protein synthesizing functions of that subunit. This is Large ribosomal subunit protein bL20 from Kocuria rhizophila (strain ATCC 9341 / DSM 348 / NBRC 103217 / DC2201).